A 420-amino-acid polypeptide reads, in one-letter code: Succinate--CoA ligase [GDP-forming] subunit beta, mitochondrial (420 aa).

Residues 35–263 enclose the ATP-grasp domain; it reads KSLMDKYGVN…NASFRQKEIF (229 aa). Residues Gln-46, 78-80, and Val-135 each bind GTP; that span reads GRG. Mg(2+) contacts are provided by Asn-232 and Asp-246. Substrate contacts are provided by residues Asn-297 and 354 to 356; that span reads GIM.

The protein belongs to the succinate/malate CoA ligase beta subunit family. GTP-specific subunit beta subfamily. As to quaternary structure, heterodimer of an alpha and a beta subunit. The beta subunit determines specificity for GTP. Requires Mg(2+) as cofactor.

It is found in the mitochondrion. It catalyses the reaction GTP + succinate + CoA = succinyl-CoA + GDP + phosphate. It participates in carbohydrate metabolism; tricarboxylic acid cycle; succinate from succinyl-CoA (ligase route): step 1/1. Its function is as follows. GTP-specific succinyl-CoA synthetase functions in the citric acid cycle (TCA), coupling the hydrolysis of succinyl-CoA to the synthesis of GTP and thus represents the only step of substrate-level phosphorylation in the TCA. The beta subunit provides nucleotide specificity of the enzyme and binds the substrate succinate, while the binding sites for coenzyme A and phosphate are found in the alpha subunit. The sequence is that of Succinate--CoA ligase [GDP-forming] subunit beta, mitochondrial (scsB) from Dictyostelium discoideum (Social amoeba).